A 227-amino-acid chain; its full sequence is Monoamine regulon transcriptional regulator (227 aa).

One can recognise an HTH luxR-type domain in the interval 155 to 220; it reads EDDLPAILTA…ELVSRTWMPA (66 aa). The segment at residues 179–198 is a DNA-binding region (H-T-H motif); sequence NKLIARQLDISLSTVKTHLR.

Its function is as follows. Positive regulatory protein for the induction of arylsulfatase synthesis (maoA), tyramine oxidase (tynA), maoC, maoE/F operon, and atsB/A operon which are all regulated by monoamines, and included under the common term of monoamine regulon. The polypeptide is Monoamine regulon transcriptional regulator (moaR) (Klebsiella aerogenes (Enterobacter aerogenes)).